Here is a 369-residue protein sequence, read N- to C-terminus: Phenylalanine--tRNA ligase alpha subunit (369 aa).

Glu272 contacts Mg(2+).

Belongs to the class-II aminoacyl-tRNA synthetase family. Phe-tRNA synthetase alpha subunit type 1 subfamily. In terms of assembly, tetramer of two alpha and two beta subunits. Mg(2+) is required as a cofactor.

The protein localises to the cytoplasm. The enzyme catalyses tRNA(Phe) + L-phenylalanine + ATP = L-phenylalanyl-tRNA(Phe) + AMP + diphosphate + H(+). The polypeptide is Phenylalanine--tRNA ligase alpha subunit (Cutibacterium acnes (strain DSM 16379 / KPA171202) (Propionibacterium acnes)).